Reading from the N-terminus, the 134-residue chain is Profilin-4 (134 aa).

C13 and C118 are joined by a disulfide. The Involved in PIP2 interaction signature appears at 84-100 (AVIRGKKGSGGITIKKT). T114 bears the Phosphothreonine mark.

The protein belongs to the profilin family. In terms of assembly, occurs in many kinds of cells as a complex with monomeric actin in a 1:1 ratio. In terms of processing, phosphorylated by MAP kinases.

The protein resides in the cytoplasm. Its subcellular location is the cytoskeleton. Its function is as follows. Binds to actin and affects the structure of the cytoskeleton. At high concentrations, profilin prevents the polymerization of actin, whereas it enhances it at low concentrations. In Olea europaea (Common olive), this protein is Profilin-4.